Reading from the N-terminus, the 346-residue chain is Probable RNA methyltransferase PSPA7_3453 (346 aa).

Glutamate 91 acts as the Proton acceptor in catalysis. Residues 94 to 320 (LLPRGGLCVS…TKVRNSAGQD (227 aa)) form the Radical SAM core domain. Cysteine 101 and cysteine 325 form a disulfide bridge. Cysteine 108, cysteine 112, and cysteine 115 together coordinate [4Fe-4S] cluster. S-adenosyl-L-methionine is bound by residues 153 to 154 (GE), serine 183, 206 to 208 (SLH), and asparagine 282. Cysteine 325 serves as the catalytic S-methylcysteine intermediate.

Belongs to the radical SAM superfamily. RlmN family. [4Fe-4S] cluster serves as cofactor.

It is found in the cytoplasm. The polypeptide is Probable RNA methyltransferase PSPA7_3453 (Pseudomonas paraeruginosa (strain DSM 24068 / PA7) (Pseudomonas aeruginosa (strain PA7))).